Consider the following 682-residue polypeptide: Nisin leader peptide-processing serine protease NisP (682 aa).

An N-terminal signal peptide occupies residues 1–22 (MKKILGFLFIVCSLGLSATVHG). The propeptide occupies 23–195 (ETTNSQQLLS…RKAKEVVSLR (173 aa)). Residues 231–566 (QWDMKYVTNN…VDLLNGKNKA (336 aa)) enclose the Peptidase S8 domain. Residues D259, H306, and S512 each act as charge relay system in the active site. The LPXTG sorting signal signature appears at 652–656 (LPVTG). Residue T655 is modified to Pentaglycyl murein peptidoglycan amidated threonine. A propeptide spans 656–682 (GDGEDFLPALGIVCISILGILKRKTKN) (removed by sortase).

Belongs to the peptidase S8 family.

It is found in the secreted. The protein localises to the cell wall. It participates in antibiotic biosynthesis; nisin biosynthesis. Its function is as follows. Cleaves the lantibiotic nisin precursor peptide. In Lactococcus lactis subsp. lactis (Streptococcus lactis), this protein is Nisin leader peptide-processing serine protease NisP (nisP).